The chain runs to 375 residues: Platelet-derived growth factor receptor-like protein (375 aa).

The signal sequence occupies residues 1–21; it reads MKVWLLLGLLLVHEALEDVTG. The segment at 22-64 is disordered; that stretch reads QHLPKNKRPKEPGENRIKPTNKKVKPKIPKIKDRDSADSTPKT. Residues 40–50 show a composition bias toward basic residues; the sequence is PTNKKVKPKIP. One can recognise an Ig-like C2-type 1 domain in the interval 62 to 159; that stretch reads PKTQSIMMQV…GYICRKDETK (98 aa). Cys96 and Cys143 form a disulfide bridge. Residues Asn132 and Asn219 are each glycosylated (N-linked (GlcNAc...) asparagine). Residues 272–375 form the Ig-like C2-type 2 domain; it reads PSTTILASSN…TTVATTVEFS (104 aa). Residues Cys293 and Cys357 are joined by a disulfide bond.

In terms of assembly, forms a complex composed of PDGFRL, TNK2 and GRB2.

The protein resides in the secreted. The sequence is that of Platelet-derived growth factor receptor-like protein (PDGFRL) from Macaca fascicularis (Crab-eating macaque).